Here is a 704-residue protein sequence, read N- to C-terminus: Seven transmembrane domain-containing serine/threonine-protein kinase 2 (704 aa).

Residues 1–5 (MPSKE) are Extracellular-facing. A helical transmembrane segment spans residues 6–26 (FIIPLILLCFYSVNGFVAVIS). The Cytoplasmic portion of the chain corresponds to 27 to 42 (SLVELFIHKASWNSIK). The chain crosses the membrane as a helical span at residues 43-63 (IFFYSLLILQCLCRCIIIGWG). Residues 64–76 (MIETVQGGEFYSN) are Extracellular-facing. A helical membrane pass occupies residues 77–97 (FPSLLFISYAGLVALQMIQFL). The Cytoplasmic segment spans residues 98-121 (PNDNQYLLLSEGKKNNHKVKVGTN). A helical membrane pass occupies residues 122–142 (ILIFFNLFMYFGMFLLFGIAE). At 143-185 (KQVGNSTSFNHHGNHNSTTSTSTDEIPLVSTEVGELYLFGDKD) the chain is on the extracellular side. N-linked (GlcNAc...) asparagine glycosylation is found at Asn-147 and Asn-158. A helical membrane pass occupies residues 186 to 206 (PIYIVLDCFYFVCLLLLLIFH). Topologically, residues 207–224 (SYVGWKTYKRNKDLFGIK) are cytoplasmic. Residues 225–245 (LNVIHLILLICIFIRSLLVII) traverse the membrane as a helical segment. Residues 246–265 (DPSSPNNSILHIDTESWLIY) lie on the Extracellular side of the membrane. N-linked (GlcNAc...) asparagine glycosylation occurs at Asn-251. The helical transmembrane segment at 266-286 (IYTISYYVVGEIIPGMLLIVI) threads the bilayer. The Cytoplasmic segment spans residues 287-704 (EFLLPYHKRK…WSIEKDSSSK (418 aa)). One can recognise a Protein kinase domain in the interval 317 to 682 (IAIHELLGMG…SLGVKFHLAN (366 aa)). ATP is bound by residues 323-331 (LGMGGSGAM) and Lys-350. Asp-506 acts as the Proton acceptor in catalysis.

The protein belongs to the protein kinase superfamily. Ser/Thr protein kinase family.

The protein resides in the membrane. The enzyme catalyses L-seryl-[protein] + ATP = O-phospho-L-seryl-[protein] + ADP + H(+). The catalysed reaction is L-threonyl-[protein] + ATP = O-phospho-L-threonyl-[protein] + ADP + H(+). In Dictyostelium discoideum (Social amoeba), this protein is Seven transmembrane domain-containing serine/threonine-protein kinase 2 (7tmk2).